Reading from the N-terminus, the 405-residue chain is MPTQSTSKRLWRDVQVFDGLVQLSEAMTVLVEDGRIAGLWPAREFNEAHAQGAACAGRGGVLTPGLVDCHTHLVYAGNRAGEFEQRLEGVSYEEIARAGGGILSSVRATRAASEDELIAASLPRLDALLADGVTTLEIKSGYGLTVADELKMLRVARRLGQLRPVRVITTLLGAHALPPEYAGRADDYVSLVCDEMIPAAAAEGLADAVDVFCEGIGFSPAQCERIYQAAQAHGLAIKAHAEQLSNLGGSALAARYGALSADHIEYLDEAGVRAMAEAGTVAVLLPGAFHVLRETQLPPIELLRQYGVPMAVASDANPGTSPICMPTLMANLACTLFRLTPREALSGMTAQAARALGRLDLGRIAVGAPADLCLWDIQQPAELAYAVQAGRLRQRVFKGEVVYAR.

Fe(3+) contacts are provided by H70 and H72. H70 and H72 together coordinate Zn(2+). Residues R79, Y142, and H175 each contribute to the 4-imidazolone-5-propanoate site. Y142 is an N-formimidoyl-L-glutamate binding site. H240 lines the Fe(3+) pocket. Residue H240 participates in Zn(2+) binding. Q243 is a binding site for 4-imidazolone-5-propanoate. Fe(3+) is bound at residue D315. D315 contacts Zn(2+). Residues N317 and G319 each contribute to the N-formimidoyl-L-glutamate site. T320 provides a ligand contact to 4-imidazolone-5-propanoate.

It belongs to the metallo-dependent hydrolases superfamily. HutI family. It depends on Zn(2+) as a cofactor. Fe(3+) is required as a cofactor.

Its subcellular location is the cytoplasm. It catalyses the reaction 4-imidazolone-5-propanoate + H2O = N-formimidoyl-L-glutamate. It participates in amino-acid degradation; L-histidine degradation into L-glutamate; N-formimidoyl-L-glutamate from L-histidine: step 3/3. Functionally, catalyzes the hydrolytic cleavage of the carbon-nitrogen bond in imidazolone-5-propanoate to yield N-formimidoyl-L-glutamate. It is the third step in the universal histidine degradation pathway. The chain is Imidazolonepropionase from Ectopseudomonas mendocina (strain ymp) (Pseudomonas mendocina).